The following is a 478-amino-acid chain: Protein ZINC INDUCED FACILITATOR-LIKE 1 (478 aa).

12 helical membrane passes run 43–63 (IIVL…YFMI), 81–101 (FVGC…GLVA), 108–128 (PVIL…GLSL), 130–150 (FWMA…LGPI), 169–189 (AVST…GFLA), 208–228 (FPFF…TIVS), 280–300 (IIVY…FSLW), 317–337 (VGSV…SLYS), 346–367 (IIVT…PLIA), 378–398 (VTSA…GLFI), 415–435 (IAMT…GIIF), and 453–473 (VFFI…KPFL).

This sequence belongs to the major facilitator superfamily. As to expression, predominantly expressed in roots and stomatal guard cells. Detected in anther stamen filaments and shoot apical meristem. In the mature portion of roots, restricted to the cortex. At the root tip, highly expressed in both the cortical and epidermal cell layers of the apical meristem and the transition zone, while absent from the quiescent center or the columella cells. Not detected in lateral root primordia.

It is found in the cell membrane. Its subcellular location is the vacuole membrane. In terms of biological role, major facilitator superfamily (MFS) transporter probably involved in 2,4-dichlorophenoxyacetic acid (2,4-D) export. K(+) may be the physiological substrate of the transporter. Modulates root auxin-related processes. Involved in auxin efflux and acts as a positive regulator of shootward transport at the root apex. May mediate proton efflux from the vacuolar compartment. Its function is as follows. Mediates drought stress tolerance by regulating stomatal closure. The protein is Protein ZINC INDUCED FACILITATOR-LIKE 1 (ZIFL1) of Arabidopsis thaliana (Mouse-ear cress).